A 263-amino-acid chain; its full sequence is Acyl-[acyl-carrier-protein]--UDP-N-acetylglucosamine O-acyltransferase (263 aa).

It belongs to the transferase hexapeptide repeat family. LpxA subfamily. Homotrimer.

It localises to the cytoplasm. It catalyses the reaction a (3R)-hydroxyacyl-[ACP] + UDP-N-acetyl-alpha-D-glucosamine = a UDP-3-O-[(3R)-3-hydroxyacyl]-N-acetyl-alpha-D-glucosamine + holo-[ACP]. It participates in glycolipid biosynthesis; lipid IV(A) biosynthesis; lipid IV(A) from (3R)-3-hydroxytetradecanoyl-[acyl-carrier-protein] and UDP-N-acetyl-alpha-D-glucosamine: step 1/6. Functionally, involved in the biosynthesis of lipid A, a phosphorylated glycolipid that anchors the lipopolysaccharide to the outer membrane of the cell. The chain is Acyl-[acyl-carrier-protein]--UDP-N-acetylglucosamine O-acyltransferase from Aeromonas salmonicida (strain A449).